The primary structure comprises 506 residues: Anaerobic nitric oxide reductase transcription regulator NorR (506 aa).

Asp-57 bears the 4-aspartylphosphate mark. In terms of domain architecture, Sigma-54 factor interaction spans Met-187–Val-416. Residues Gly-215–Glu-222 and Ala-278–Glu-287 each bind ATP. The segment at residues Trp-481–Lys-500 is a DNA-binding region (H-T-H motif).

Its pathway is nitrogen metabolism; nitric oxide reduction. In terms of biological role, required for the expression of anaerobic nitric oxide (NO) reductase, acts as a transcriptional activator for at least the norVW operon. Activation also requires sigma-54. The sequence is that of Anaerobic nitric oxide reductase transcription regulator NorR from Salmonella dublin (strain CT_02021853).